We begin with the raw amino-acid sequence, 497 residues long: IWS1-like protein (497 aa).

Residues 1–191 form a disordered region; the sequence is MSDHEGASPA…SDRRGGRNFE (191 aa). Low complexity-rich tracts occupy residues 7 to 23 and 47 to 57; these read ASPA…PVSP and PLAPRSPASPR. Composition is skewed to basic and acidic residues over residues 123–134, 144–160, and 181–191; these read EGDKQQKRKDLF, DRPK…VKGD, and PSDRRGGRNFE. Positions 281-361 constitute a TFIIS N-terminal domain; it reads SALSEWLAPL…GEWARPIYHL (81 aa). Residues 369–433 form a disordered region; that stretch reads SRQEREERDY…GDKGYINRAR (65 aa). 2 stretches are compositionally biased toward basic and acidic residues: residues 370 to 382 and 401 to 411; these read RQER…SRMP and APKRPRIRDAE.

This sequence belongs to the IWS1 family.

The protein resides in the nucleus. This is IWS1-like protein from Caenorhabditis briggsae.